The chain runs to 128 residues: Large ribosomal subunit protein bL12 (128 aa).

This sequence belongs to the bacterial ribosomal protein bL12 family. As to quaternary structure, homodimer. Part of the ribosomal stalk of the 50S ribosomal subunit. Forms a multimeric L10(L12)X complex, where L10 forms an elongated spine to which 2 to 4 L12 dimers bind in a sequential fashion. Binds GTP-bound translation factors.

Its function is as follows. Forms part of the ribosomal stalk which helps the ribosome interact with GTP-bound translation factors. Is thus essential for accurate translation. The protein is Large ribosomal subunit protein bL12 of Sulfurihydrogenibium sp. (strain YO3AOP1).